A 329-amino-acid polypeptide reads, in one-letter code: RING finger protein 225 (329 aa).

The interval 1–55 (MPCPRPFWLRHSRAPQGSGPSSPGSLSAPRSPSRGEDQEEEEEEEGDGSPGSGPI) is disordered. Low complexity predominate over residues 14 to 32 (APQGSGPSSPGSLSAPRSP). The segment covering 37-47 (DQEEEEEEEGD) has biased composition (acidic residues). The segment at 64–112 (CLICVSSFDGVFKLPKRLDCGHVFCLECLARLSLATAGGGNAVACPVCR) adopts an RING-type zinc-finger fold. Positions 122 to 181 (GLPALPTQSGLLPRDARAPPSRQGSVRFDRRRGLLYLRPPPPPPGPRKARAPPPPPPLRL) are disordered. Residues 159 to 179 (RPPPPPPGPRKARAPPPPPPL) are compositionally biased toward pro residues. Residues 203–223 (ALAVLVAAGLVVSGVYIFFLI) traverse the membrane as a helical segment. Positions 248–329 (FPPRPPPGSP…RGARRLWGSQ (82 aa)) are disordered. A compositionally biased stretch (acidic residues) spans 281–293 (DALEPEAGPEDPA). Residues 294–304 (EAERTLDRRSD) show a composition bias toward basic and acidic residues.

It is found in the membrane. This Homo sapiens (Human) protein is RING finger protein 225.